We begin with the raw amino-acid sequence, 720 residues long: Glycine--tRNA ligase beta subunit (720 aa).

This sequence belongs to the class-II aminoacyl-tRNA synthetase family. In terms of assembly, tetramer of two alpha and two beta subunits.

The protein localises to the cytoplasm. It carries out the reaction tRNA(Gly) + glycine + ATP = glycyl-tRNA(Gly) + AMP + diphosphate. The sequence is that of Glycine--tRNA ligase beta subunit from Acidovorax ebreus (strain TPSY) (Diaphorobacter sp. (strain TPSY)).